The following is a 1167-amino-acid chain: Topoisomerase 1-associated factor 1 (1167 aa).

5 disordered regions span residues 332–353 (SKRWNKPRRGRKAQDMSVNNDF), 563–594 (SRRRARKRKREEQLVNKGSDEEQESEDEDYAE), 889–969 (KYSH…LENT), 981–1093 (YVHA…DAID), and 1105–1167 (FDDD…SDSE). The span at 572 to 582 (REEQLVNKGSD) shows a compositional bias: basic and acidic residues. 2 stretches are compositionally biased toward acidic residues: residues 583 to 593 (EEQESEDEDYA) and 949 to 958 (EEEPVDEETL). Basic and acidic residues-rich tracts occupy residues 959 to 969 (EERRQARLENT) and 996 to 1013 (EFFRLEEERRNEQSERIK). The segment covering 1062-1074 (ELEEDDILMDDME) has biased composition (acidic residues). The span at 1078 to 1088 (RASSGEYSSND) shows a compositional bias: polar residues. Positions 1110 to 1127 (AFGRDRDKDETSVDRDGA) are enriched in basic and acidic residues.

This sequence belongs to the timeless family.

The protein resides in the nucleus. Functionally, involved in chromosome segregation during meiosis and DNA damage repair. This is Topoisomerase 1-associated factor 1 (tof1) from Emericella nidulans (strain FGSC A4 / ATCC 38163 / CBS 112.46 / NRRL 194 / M139) (Aspergillus nidulans).